The primary structure comprises 342 residues: tRNA N6-adenosine threonylcarbamoyltransferase (342 aa).

Residues H115 and H119 each coordinate Fe cation. Substrate is bound by residues 138 to 142 (IISGG), D171, G184, D188, and N276. D304 contributes to the Fe cation binding site.

It belongs to the KAE1 / TsaD family. The cofactor is Fe(2+).

It localises to the cytoplasm. It catalyses the reaction L-threonylcarbamoyladenylate + adenosine(37) in tRNA = N(6)-L-threonylcarbamoyladenosine(37) in tRNA + AMP + H(+). Functionally, required for the formation of a threonylcarbamoyl group on adenosine at position 37 (t(6)A37) in tRNAs that read codons beginning with adenine. Is involved in the transfer of the threonylcarbamoyl moiety of threonylcarbamoyl-AMP (TC-AMP) to the N6 group of A37, together with TsaE and TsaB. TsaD likely plays a direct catalytic role in this reaction. This Endomicrobium trichonymphae protein is tRNA N6-adenosine threonylcarbamoyltransferase.